We begin with the raw amino-acid sequence, 149 residues long: Arginine repressor (149 aa).

The protein belongs to the ArgR family.

It is found in the cytoplasm. It functions in the pathway amino-acid biosynthesis; L-arginine biosynthesis [regulation]. Functionally, regulates arginine biosynthesis genes. This Bacillus cereus (strain ATCC 10987 / NRS 248) protein is Arginine repressor.